Consider the following 115-residue polypeptide: UPF0102 protein Swol_1475 (115 aa).

It belongs to the UPF0102 family.

The sequence is that of UPF0102 protein Swol_1475 from Syntrophomonas wolfei subsp. wolfei (strain DSM 2245B / Goettingen).